Reading from the N-terminus, the 424-residue chain is UDP-galactose transporter homolog 1 (424 aa).

Transmembrane regions (helical) follow at residues 57 to 77 (LWQL…WGVL), 107 to 127 (IVLN…YLYF), 144 to 164 (IIFP…FGYA), 173 to 193 (TFIL…LTIF), 197 to 217 (YPLY…TFTL), and 234 to 254 (TSGS…LDGL). An N-linked (GlcNAc...) asparagine glycan is attached at N256. Helical transmembrane passes span 293–313 (LLIM…PVPI), 337–357 (SVLG…YTLS), and 380–400 (VFWF…LVFG).

This sequence belongs to the nucleotide-sugar transporter family. SLC35B subfamily.

It is found in the endoplasmic reticulum membrane. May be involved in specific transport of UDP-Gal from the cytosol to the Golgi lumen. Involved in the maintenance of optimal conditions for the folding of secretory pathway proteins in the endoplasmic reticulum. The polypeptide is UDP-galactose transporter homolog 1 (hut1) (Emericella nidulans (strain FGSC A4 / ATCC 38163 / CBS 112.46 / NRRL 194 / M139) (Aspergillus nidulans)).